The chain runs to 422 residues: Transcription termination factor Rho 1 (422 aa).

The Rho RNA-BD domain occupies 49-124 (AAIGGGVVEI…VKAHSINFTD (76 aa)). Residues 173–178 (GKGQRA), 185–190 (RAGKTI), and Arg216 each bind ATP.

The protein belongs to the Rho family. In terms of assembly, homohexamer. The homohexamer assembles into an open ring structure.

Functionally, facilitates transcription termination by a mechanism that involves Rho binding to the nascent RNA, activation of Rho's RNA-dependent ATPase activity, and release of the mRNA from the DNA template. In Ehrlichia chaffeensis (strain ATCC CRL-10679 / Arkansas), this protein is Transcription termination factor Rho 1.